We begin with the raw amino-acid sequence, 342 residues long: MEEELKNFIKLWISAIISISYCYYLSTGIKAGVFRLLSVLPVCALFLVFPLFFSYVHFSGCMAFFLSWLANFKLILFSFDQGPLSPLPRTLSRFICITCFPIKPQQNPNIQNYKIPIWLFAIKVVIFVVLLQMYEYKQYLSPALLLVFNSLHIFLELEIVFMLVKALVFITLGCDLEPQSNEPYLATSLQDFWGRRWNLMVPAILRPAVYLPARRMACRKVNSDQAMFLGVFAAFLVSGAVHEMLFFYLTREVPTGEVTWFFLLHGVCTVAEVAVKKSTFVRRWWRVSPTVSRLLTVGFVVVTSGWFFFPLIRSGIIERLASEALMCIDFVKHKFLLLLLGD.

8 helical membrane passes run 9 to 29 (IKLW…STGI), 36 to 56 (LLSV…FSYV), 58 to 78 (FSGC…ILFS), 115 to 135 (IPIW…QMYE), 153 to 173 (IFLE…ITLG), 227 to 247 (MFLG…MLFF), 255 to 275 (TGEV…EVAV), and 297 to 317 (VGFV…SGII).

This sequence belongs to the wax synthase family.

The protein resides in the membrane. It carries out the reaction a long chain fatty alcohol + a fatty acyl-CoA = a wax ester + CoA. Its function is as follows. Catalyzes the final step in the synthesis of long-chain linear esters (waxes). This is Probable long-chain-alcohol O-fatty-acyltransferase 3 (AT3) from Arabidopsis thaliana (Mouse-ear cress).